Reading from the N-terminus, the 232-residue chain is dTTP/UTP pyrophosphatase (232 aa).

Aspartate 103 functions as the Proton acceptor in the catalytic mechanism.

The protein belongs to the Maf family. YhdE subfamily. A divalent metal cation serves as cofactor.

The protein resides in the cytoplasm. It catalyses the reaction dTTP + H2O = dTMP + diphosphate + H(+). The catalysed reaction is UTP + H2O = UMP + diphosphate + H(+). It carries out the reaction 5-methyl-UTP + H2O = 5-methyl-UMP + diphosphate + H(+). The enzyme catalyses psi-UTP + H2O = psi-UMP + diphosphate + H(+). In terms of biological role, nucleoside triphosphate pyrophosphatase that hydrolyzes dTTP and UTP. Can also hydrolyze the modified nucleotides 5-methyl-UTP (m(5)UTP) and pseudo-UTP. Has weak activity with CTP. May have a dual role in cell division arrest and in preventing the incorporation of modified nucleotides into cellular nucleic acids. The chain is dTTP/UTP pyrophosphatase from Saccharomyces cerevisiae (strain ATCC 204508 / S288c) (Baker's yeast).